The chain runs to 273 residues: Beta-lactamase OXA-23 (273 aa).

The first 17 residues, 1–17 (MNKYFTCYVVASLFLSG), serve as a signal peptide directing secretion. The Acyl-ester intermediate role is filled by S79. Residues S79, K82, S126, T217, W219, and R259 each contribute to the a beta-lactam site. At K82 the chain carries N6-carboxylysine.

This sequence belongs to the class-D beta-lactamase family. Monomer. Post-translationally, carboxylated on the epsilon-amino group of a lysine, with the resulting carbamate functional group serving as a general base. Probably N-carboxylated at Lys-82 at neutral pH in vivo and undergoes complete N-decarboxylation, at pH 4.1, in vitro.

The protein resides in the periplasm. It catalyses the reaction a beta-lactam + H2O = a substituted beta-amino acid. With respect to regulation, inhibited by the desmethyl carbapenem, MA-1-206, via a covalent binding to Ser-79. Class D beta-lactamase which confers resistance to the beta-lactam antibiotics, including ampicillin, and carbapenems such as imipenem and meropenem. Acts via hydrolysis of the beta-lactam ring. Has penicillin-, cephalosporin- and carbapenem-hydrolyzing activities, but lacks ceftazidime-hydrolyzing activity. This is Beta-lactamase OXA-23 from Acinetobacter baumannii.